The sequence spans 188 residues: A-type ATP synthase subunit E (188 aa).

Belongs to the V-ATPase E subunit family. In terms of assembly, has multiple subunits with at least A(3), B(3), C, D, E, F, H, I and proteolipid K(x).

It is found in the cell membrane. Component of the A-type ATP synthase that produces ATP from ADP in the presence of a proton gradient across the membrane. In Archaeoglobus fulgidus (strain ATCC 49558 / DSM 4304 / JCM 9628 / NBRC 100126 / VC-16), this protein is A-type ATP synthase subunit E.